A 310-amino-acid chain; its full sequence is MTDIRITGIPKEAGFGDYVALLKPRVMSLVVFTALVGLLVAPVTVHPMIALTGILFIALGAGASGALNMWWDEDIDRVMKRTRNRPVPSGTVAPGEALGIGLALSGIAVVMLGLATNLFAAGLLAFTIFFYAVVYSMWLKRTTPQNIVIGGAAGAFPPMIGWAVATGGVSVESLFMFALIFMWTPPHFWSLALFMKSDYSDAGVPMLTVTHGRRVTRAHVLVYSLLLAPLAVAGAFTGIGGPLYLATALALNGWLLVGAVRIWRRDEAQAEADRYRVEKGFFRFSLYYLFLHFGAILAEAALKPYGLGGW.

The next 9 membrane-spanning stretches (helical) occupy residues 26–45 (VMSL…PVTV), 49–71 (IALT…NMWW), 95–115 (GEAL…LGLA), 118–138 (LFAA…YSMW), 147–167 (IVIG…VATG), 174–194 (LFMF…LALF), 220–240 (VLVY…TGIG), 243–263 (LYLA…VRIW), and 289–309 (LFLH…GLGG).

It belongs to the UbiA prenyltransferase family. Protoheme IX farnesyltransferase subfamily. Interacts with CtaA.

Its subcellular location is the cell inner membrane. It carries out the reaction heme b + (2E,6E)-farnesyl diphosphate + H2O = Fe(II)-heme o + diphosphate. The protein operates within porphyrin-containing compound metabolism; heme O biosynthesis; heme O from protoheme: step 1/1. Functionally, converts heme B (protoheme IX) to heme O by substitution of the vinyl group on carbon 2 of heme B porphyrin ring with a hydroxyethyl farnesyl side group. The protein is Protoheme IX farnesyltransferase of Cereibacter sphaeroides (strain ATCC 17029 / ATH 2.4.9) (Rhodobacter sphaeroides).